The primary structure comprises 104 residues: Large ribosomal subunit protein bL21 (104 aa).

The protein belongs to the bacterial ribosomal protein bL21 family. Part of the 50S ribosomal subunit. Contacts protein L20.

This protein binds to 23S rRNA in the presence of protein L20. This chain is Large ribosomal subunit protein bL21, found in Rhodopirellula baltica (strain DSM 10527 / NCIMB 13988 / SH1).